A 618-amino-acid polypeptide reads, in one-letter code: Probable arginine--tRNA ligase, cytoplasmic (618 aa).

Interaction with tRNA regions lie at residues 60–61 and 104–109; these read ET and NGIFLR. Residues 146–151, His-160, Tyr-359, Asp-363, and Gln-387 each bind L-arginine; that span reads EFSSPN. The 'HIGH' region signature appears at 149-160; the sequence is SPNIAKPFHAGH. The interaction with tRNA stretch occupies residues 496 to 510; that stretch reads DTGPYLQYAHSRLSS.

The protein belongs to the class-I aminoacyl-tRNA synthetase family.

The protein resides in the cytoplasm. It carries out the reaction tRNA(Arg) + L-arginine + ATP = L-arginyl-tRNA(Arg) + AMP + diphosphate. Its function is as follows. Forms part of a macromolecular complex that catalyzes the attachment of specific amino acids to cognate tRNAs during protein synthesis. This is Probable arginine--tRNA ligase, cytoplasmic (mrs1) from Schizosaccharomyces pombe (strain 972 / ATCC 24843) (Fission yeast).